Consider the following 1154-residue polypeptide: Voltage-gated inwardly rectifying potassium channel KCNH2 (1154 aa).

Residues 1–403 (MPVRRGHVAP…RIHRWTILHY (403 aa)) are Cytoplasmic-facing. The region spanning 41 to 70 (VIYCNDGFCELCGYSRAEVMQRPCTCDFLH) is the PAS domain. A PAC domain is found at 92-144 (RKVEIAFYRKDGSCFLCLVDVVPVKNEDGAVIMFILNFEVVMEKDMVGSPARD). The segment at 233–312 (ALVGSGSPPA…ASTGAMHPLR (80 aa)) is disordered. Phosphoserine is present on Ser-239. Positions 258 to 269 (PDGSGSSCSLAR) are enriched in polar residues. Residues Ser-283, Ser-284, Ser-320, and Ser-351 each carry the phosphoserine modification. The helical transmembrane segment at 404-424 (SPFKAVWDWLILLLVIYTAVF) threads the bilayer. Topologically, residues 425–450 (TPYSAAFLLKETEEGSQAPDCGYACQ) are extracellular. A helical membrane pass occupies residues 451–471 (PLAVVDLIVDIMFIVDILINF). Topologically, residues 472-495 (RTTYVNANEEVVSHPGRIAVHYFK) are cytoplasmic. The helical transmembrane segment at 496–516 (GWFLIDMVAAIPFDLLIFGSG) threads the bilayer. The Extracellular portion of the chain corresponds to 517-520 (SEEL). A helical; Voltage-sensor membrane pass occupies residues 521–541 (IGLLKTARLLRLVRVARKLDR). The Cytoplasmic segment spans residues 542 to 547 (YSEYGA). Residues 548-568 (AVLFLLMCTFALIAHWLACIW) form a helical membrane-spanning segment. The Extracellular portion of the chain corresponds to 569 to 611 (YAIGNMEQPNMDSHIGWLHNLGDQIGKPYNSSGLGGPSIKDKY). The pore-forming intramembrane region spans 612-632 (VTALYFTFSSLTSVGFGNVSP). Positions 624 to 629 (SVGFGN) match the Selectivity filter motif. The Extracellular segment spans residues 633–638 (NTNSEK). A helical transmembrane segment spans residues 639-659 (IFSICVMLIGSLMYASIFGNV). Over 660-1154 (SAIIQRLYSG…LHRHGSDPGS (495 aa)) the chain is Cytoplasmic. The cNMP-binding domain stretch occupies residues 742-842 (PFRGATKGCL…IHRDDLLEVL (101 aa)). The interval 870 to 985 (GSPGSTELEG…DVEKSSDTCN (116 aa)) is disordered. 2 positions are modified to phosphoserine: Ser-871 and Ser-874. Basic residues predominate over residues 883-892 (RQRKRKLSFR). A compositionally biased stretch (gly residues) spans 916-927 (GPSGRGQQGGPW). Positions 928–939 (GESLSSGPSSPE) are enriched in low complexity. Arg-1014 carries the post-translational modification Omega-N-methylarginine. A coiled-coil region spans residues 1037–1064 (RGDVESRLDALQRQLNRLETRLSADMAT). Residues 1125-1154 (DGPARRLSLPGQLGALTSQPLHRHGSDPGS) are disordered. The residue at position 1132 (Ser-1132) is a Phosphoserine.

This sequence belongs to the potassium channel family. H (Eag) (TC 1.A.1.20) subfamily. Kv11.1/KCNH2 sub-subfamily. In terms of assembly, the potassium channel is probably composed of a homo- or heterotetrameric complex of pore-forming alpha subunits that can associate with modulating beta subunits. Interacts with DNAJB12 and DNAJB14; chaperones DNAJB12 and DNAJB14 promote tetramerization. Heteromultimer with KCNH6/ERG2 and KCNH7/ERG3. Interacts with ALG10B. Forms a stable complex with KCNE1 or KCNE2, and that this heteromultimerization regulates Inward rectifier potassium channel activity. Interacts with CANX. The core-glycosylated, but not the fully glycosylated form interacts with RNF207. Interacts with NDFIP1 and NDFIP2; this interaction decreases the cell membrane expression by targeting KCNH2, through interaction with NEDD4L, for the degradation through the multivesicular bodies (MVBs)-lysosomal pathway. Post-translationally, phosphorylated on serine and threonine residues. Phosphorylation by PKA inhibits ion conduction.

Its subcellular location is the cell membrane. The enzyme catalyses K(+)(in) = K(+)(out). In terms of biological role, pore-forming (alpha) subunit of voltage-gated inwardly rectifying potassium channel. Characterized by unusual gating kinetics by producing relatively small outward currents during membrane depolarization and large inward currents during subsequent repolarization which reflect a rapid inactivation during depolarization and quick recovery from inactivation but slow deactivation (closing) during repolarization. Channel properties are modulated by cAMP and subunit assembly. Forms a stable complex with KCNE1 or KCNE2, and that this heteromultimerization regulates inward rectifier potassium channel activity. The sequence is that of Voltage-gated inwardly rectifying potassium channel KCNH2 from Sus scrofa (Pig).